The primary structure comprises 425 residues: Kynureninase (425 aa).

Residues leucine 105, threonine 106, 133-136, aspartate 218, histidine 221, and tyrosine 243 each bind pyridoxal 5'-phosphate; that span reads FPSD. Residue lysine 244 is modified to N6-(pyridoxal phosphate)lysine. Residues tryptophan 274 and asparagine 302 each contribute to the pyridoxal 5'-phosphate site.

It belongs to the kynureninase family. In terms of assembly, homodimer. Requires pyridoxal 5'-phosphate as cofactor.

The enzyme catalyses L-kynurenine + H2O = anthranilate + L-alanine + H(+). It catalyses the reaction 3-hydroxy-L-kynurenine + H2O = 3-hydroxyanthranilate + L-alanine + H(+). Its pathway is amino-acid degradation; L-kynurenine degradation; L-alanine and anthranilate from L-kynurenine: step 1/1. The protein operates within cofactor biosynthesis; NAD(+) biosynthesis; quinolinate from L-kynurenine: step 2/3. Functionally, catalyzes the cleavage of L-kynurenine (L-Kyn) and L-3-hydroxykynurenine (L-3OHKyn) into anthranilic acid (AA) and 3-hydroxyanthranilic acid (3-OHAA), respectively. The protein is Kynureninase of Flavobacterium psychrophilum (strain ATCC 49511 / DSM 21280 / CIP 103535 / JIP02/86).